The sequence spans 366 residues: Anthranilate phosphoribosyltransferase (366 aa).

Residues Gly-79, Gly-82–Asp-83, Thr-87, Asn-89–Thr-92, Lys-107–Ser-115, and Ser-119 contribute to the 5-phospho-alpha-D-ribose 1-diphosphate site. Residue Gly-79 coordinates anthranilate. Ser-91 is a Mg(2+) binding site. Asn-110 contacts anthranilate. Arg-165 is a binding site for anthranilate. Residues Asp-223 and Glu-224 each contribute to the Mg(2+) site. Residues Glu-342–Val-366 form a disordered region. Polar residues predominate over residues Ser-345–Ser-359.

Belongs to the anthranilate phosphoribosyltransferase family. Homodimer. Mg(2+) serves as cofactor.

The catalysed reaction is N-(5-phospho-beta-D-ribosyl)anthranilate + diphosphate = 5-phospho-alpha-D-ribose 1-diphosphate + anthranilate. It participates in amino-acid biosynthesis; L-tryptophan biosynthesis; L-tryptophan from chorismate: step 2/5. Its function is as follows. Catalyzes the transfer of the phosphoribosyl group of 5-phosphorylribose-1-pyrophosphate (PRPP) to anthranilate to yield N-(5'-phosphoribosyl)-anthranilate (PRA). The polypeptide is Anthranilate phosphoribosyltransferase (Methanosarcina barkeri (strain Fusaro / DSM 804)).